The chain runs to 114 residues: uncharacterized protein (114 aa).

This sequence to E.coli YfiI and P.aeruginosa RluD.

This is an uncharacterized protein from Escherichia coli O6:H1 (strain CFT073 / ATCC 700928 / UPEC).